The sequence spans 348 residues: UDP-3-O-acylglucosamine N-acyltransferase (348 aa).

Catalysis depends on histidine 248, which acts as the Proton acceptor.

It belongs to the transferase hexapeptide repeat family. LpxD subfamily. In terms of assembly, homotrimer.

The catalysed reaction is a UDP-3-O-[(3R)-3-hydroxyacyl]-alpha-D-glucosamine + a (3R)-hydroxyacyl-[ACP] = a UDP-2-N,3-O-bis[(3R)-3-hydroxyacyl]-alpha-D-glucosamine + holo-[ACP] + H(+). It participates in bacterial outer membrane biogenesis; LPS lipid A biosynthesis. In terms of biological role, catalyzes the N-acylation of UDP-3-O-acylglucosamine using 3-hydroxyacyl-ACP as the acyl donor. Is involved in the biosynthesis of lipid A, a phosphorylated glycolipid that anchors the lipopolysaccharide to the outer membrane of the cell. The sequence is that of UDP-3-O-acylglucosamine N-acyltransferase from Rippkaea orientalis (strain PCC 8801 / RF-1) (Cyanothece sp. (strain PCC 8801)).